We begin with the raw amino-acid sequence, 624 residues long: Histone-lysine N-methyltransferase, H3 lysine-9 specific SUVH4 (624 aa).

Disordered stretches follow at residues M1–V25 and D54–Q86. In terms of domain architecture, YDG spans G149–R302. A Pre-SET domain is found at T381–R443. C383, C385, C389, C395, C397, C425, C429, C431, and C435 together coordinate Zn(2+). The SET domain occupies F446–G594. S-adenosyl-L-methionine is bound by residues K456 to W458, Y493, R548, and N551 to H552. Zn(2+) is bound by residues C554, C612, C614, and C619. The region spanning K608–Y624 is the Post-SET domain.

This sequence belongs to the class V-like SAM-binding methyltransferase superfamily. Histone-lysine methyltransferase family. Suvar3-9 subfamily. In terms of assembly, interacts with H3 histone. In terms of tissue distribution, expressed in leaves stems and flowers.

The protein resides in the nucleus. Its subcellular location is the chromosome. The protein localises to the centromere. The catalysed reaction is N(6)-methyl-L-lysyl(9)-[histone H3] + S-adenosyl-L-methionine = N(6),N(6)-dimethyl-L-lysyl(9)-[histone H3] + S-adenosyl-L-homocysteine + H(+). It carries out the reaction L-lysyl(9)-[histone H3] + S-adenosyl-L-methionine = N(6)-methyl-L-lysyl(9)-[histone H3] + S-adenosyl-L-homocysteine + H(+). Its function is as follows. Histone methyltransferase. Methylates 'Lys-9' of histone H3. H3 'Lys-9' methylation represents a specific tag for epigenetic transcriptional repression. The silencing mechanism via DNA CpNpG methylation requires the targeting of chromomethylase CMT3 to methylated histones, probably through an interaction with an HP1-like adapter. By its function, KYP is directly required for the maintenance of the DNA CpNpG and asymmetric methylation. Involved in the silencing of transposable elements. This Arabidopsis thaliana (Mouse-ear cress) protein is Histone-lysine N-methyltransferase, H3 lysine-9 specific SUVH4 (SUVH4).